Reading from the N-terminus, the 178-residue chain is 2-C-methyl-D-erythritol 2,4-cyclodiphosphate synthase (178 aa).

Aspartate 24, histidine 26, and histidine 61 together coordinate a divalent metal cation. Residue 24-26 (DSH) coordinates 4-CDP-2-C-methyl-D-erythritol 2-phosphate. 150-153 (TSGE) contributes to the 4-CDP-2-C-methyl-D-erythritol 2-phosphate binding site.

The protein belongs to the IspF family. Homotrimer. It depends on a divalent metal cation as a cofactor.

It carries out the reaction 4-CDP-2-C-methyl-D-erythritol 2-phosphate = 2-C-methyl-D-erythritol 2,4-cyclic diphosphate + CMP. It participates in isoprenoid biosynthesis; isopentenyl diphosphate biosynthesis via DXP pathway; isopentenyl diphosphate from 1-deoxy-D-xylulose 5-phosphate: step 4/6. In terms of biological role, involved in the biosynthesis of isopentenyl diphosphate (IPP) and dimethylallyl diphosphate (DMAPP), two major building blocks of isoprenoid compounds. Catalyzes the conversion of 4-diphosphocytidyl-2-C-methyl-D-erythritol 2-phosphate (CDP-ME2P) to 2-C-methyl-D-erythritol 2,4-cyclodiphosphate (ME-CPP) with a corresponding release of cytidine 5-monophosphate (CMP). The sequence is that of 2-C-methyl-D-erythritol 2,4-cyclodiphosphate synthase from Chlamydia trachomatis serovar L2b (strain UCH-1/proctitis).